A 173-amino-acid polypeptide reads, in one-letter code: CKLF-like MARVEL transmembrane domain-containing protein 8 (173 aa).

The MARVEL domain occupies 36 to 168 (FLRTPPGLLI…NTYFSFIAWR (133 aa)). The next 4 membrane-spanning stretches (helical) occupy residues 41–61 (PGLL…LIAG), 70–90 (FGWV…FLIV), 105–125 (TTVG…AAIV), and 147–167 (FFAF…FIAW).

Belongs to the chemokine-like factor family.

It localises to the membrane. This chain is CKLF-like MARVEL transmembrane domain-containing protein 8 (Cmtm8), found in Mus musculus (Mouse).